Reading from the N-terminus, the 35-residue chain is Sorbin and SH3 domain-containing protein 1 (35 aa).

A SoHo domain is found at 1-8 (LNRDDDSD). Ser15 is modified (phosphoserine). Positions 22–35 (CDDGWFVGTSRRTK) constitute an SH3 domain.

As to quaternary structure, interacts with the long isoform of AFDN and with VCL. AFDN and VCL bind to SORBS1 in a competitive manner and do not form a ternary complex. Interacts with ABL1, CBL, CBLB and INPPL1/SHIP2 through the third SH3 domain. Interaction with ABL1 occurs only after insulin stimulation while this has no effect on the interaction with INPPL1. Interacts with the insulin receptor but dissociates from it following insulin stimulation. Also interacts with SCA7, PTK2/FAK1 and flotillin. Interacts (via SH3 domain 2) with PXN. Interacts (via third SH3 domain) with the Ten-1 ICD form of TENM1; the interaction induces the translocation of SORBS1 to the nucleus. In terms of processing, O-glycosylated.

It is found in the cell junction. The protein localises to the adherens junction. It localises to the cell membrane. The protein resides in the cytoplasm. Its subcellular location is the cytoskeleton. It is found in the focal adhesion. The protein localises to the nucleus. It localises to the nucleus matrix. In terms of biological role, plays a role in tyrosine phosphorylation of CBL by linking CBL to the insulin receptor. Required for insulin-stimulated glucose transport. Involved in formation of actin stress fibers and focal adhesions. This is Sorbin and SH3 domain-containing protein 1 from Rattus norvegicus (Rat).